The primary structure comprises 204 residues: Ribonuclease HII (204 aa).

Residues 17 to 204 enclose the RNase H type-2 domain; the sequence is TLIAGVDEVG…KPVKKVLGLL (188 aa). Asp-23, Glu-24, and Asp-115 together coordinate a divalent metal cation.

It belongs to the RNase HII family. It depends on Mn(2+) as a cofactor. Requires Mg(2+) as cofactor.

The protein resides in the cytoplasm. The catalysed reaction is Endonucleolytic cleavage to 5'-phosphomonoester.. Endonuclease that specifically degrades the RNA of RNA-DNA hybrids. The protein is Ribonuclease HII of Psychromonas ingrahamii (strain DSM 17664 / CCUG 51855 / 37).